The chain runs to 316 residues: Serpentine receptor class gamma-4 (316 aa).

Transmembrane regions (helical) follow at residues 21–41, 50–70, 99–121, 140–160, 188–208, 229–249, and 258–278; these read FVYL…IWGT, SFFT…FLDV, IVYP…LSIN, MKKV…NVII, FQII…SITL, TAWI…FAFF, and IFYI…PIVM.

The protein belongs to the nematode receptor-like protein srg family.

The protein resides in the membrane. The protein is Serpentine receptor class gamma-4 (srg-4) of Caenorhabditis elegans.